The primary structure comprises 283 residues: HTH-type transcriptional activator RhaR (283 aa).

An HTH araC/xylS-type domain is found at 179–277 (DLLMAALGNS…GVTPRVWRQQ (99 aa)). 2 DNA-binding regions (H-T-H motif) span residues 196 to 217 (QHFCSHYQIAERPLRQLFRQQT) and 244 to 267 (ISEIAARCGFEDSNYFSVVFTRET).

As to quaternary structure, binds DNA as a dimer.

The protein resides in the cytoplasm. Its function is as follows. Activates expression of the rhaSR operon in response to L-rhamnose. The protein is HTH-type transcriptional activator RhaR of Cronobacter sakazakii (strain ATCC BAA-894) (Enterobacter sakazakii).